The primary structure comprises 360 residues: DNA replication and repair protein RecF (360 aa).

Residue 30-37 (GHNGSGKT) participates in ATP binding.

It belongs to the RecF family.

It localises to the cytoplasm. In terms of biological role, the RecF protein is involved in DNA metabolism; it is required for DNA replication and normal SOS inducibility. RecF binds preferentially to single-stranded, linear DNA. It also seems to bind ATP. In Shewanella sediminis (strain HAW-EB3), this protein is DNA replication and repair protein RecF.